The primary structure comprises 338 residues: tRNA N6-adenosine threonylcarbamoyltransferase (338 aa).

Residues His-111 and His-115 each coordinate Fe cation. Residues 134–138, Asp-167, Gly-180, and Asn-272 each bind substrate; that span reads LVSGG. A Fe cation-binding site is contributed by Asp-300.

Belongs to the KAE1 / TsaD family. It depends on Fe(2+) as a cofactor.

The protein resides in the cytoplasm. The catalysed reaction is L-threonylcarbamoyladenylate + adenosine(37) in tRNA = N(6)-L-threonylcarbamoyladenosine(37) in tRNA + AMP + H(+). Functionally, required for the formation of a threonylcarbamoyl group on adenosine at position 37 (t(6)A37) in tRNAs that read codons beginning with adenine. Is involved in the transfer of the threonylcarbamoyl moiety of threonylcarbamoyl-AMP (TC-AMP) to the N6 group of A37, together with TsaE and TsaB. TsaD likely plays a direct catalytic role in this reaction. The chain is tRNA N6-adenosine threonylcarbamoyltransferase from Shewanella baltica (strain OS155 / ATCC BAA-1091).